We begin with the raw amino-acid sequence, 192 residues long: ATP-dependent Clp protease proteolytic subunit 1 (192 aa).

S92 (nucleophile) is an active-site residue. H117 is an active-site residue.

The protein belongs to the peptidase S14 family. In terms of assembly, fourteen ClpP subunits assemble into 2 heptameric rings which stack back to back to give a disk-like structure with a central cavity, resembling the structure of eukaryotic proteasomes.

Its subcellular location is the cytoplasm. It catalyses the reaction Hydrolysis of proteins to small peptides in the presence of ATP and magnesium. alpha-casein is the usual test substrate. In the absence of ATP, only oligopeptides shorter than five residues are hydrolyzed (such as succinyl-Leu-Tyr-|-NHMec, and Leu-Tyr-Leu-|-Tyr-Trp, in which cleavage of the -Tyr-|-Leu- and -Tyr-|-Trp bonds also occurs).. Its function is as follows. Cleaves peptides in various proteins in a process that requires ATP hydrolysis. Has a chymotrypsin-like activity. Plays a major role in the degradation of misfolded proteins. The polypeptide is ATP-dependent Clp protease proteolytic subunit 1 (Chlamydia trachomatis serovar D (strain ATCC VR-885 / DSM 19411 / UW-3/Cx)).